Reading from the N-terminus, the 519-residue chain is AarF domain-containing protein kinase 1 (519 aa).

Positions 145 to 481 (SFEDTPLGAA…SLYRRVHISL (337 aa)) constitute a Protein kinase domain. ATP-binding positions include 151-159 (LGAASLAQV) and lysine 173. Aspartate 305 acts as the Proton acceptor in catalysis.

Belongs to the protein kinase superfamily. ADCK protein kinase family.

It is found in the mitochondrion. Functionally, appears to be essential for maintaining mitochondrial cristae formation and mitochondrial function by acting via YME1L1 in a kinase-independent manner to regulate essential mitochondrial structural proteins OPA1 and IMMT. The action of this enzyme is not yet clear. It is not known if it has protein kinase activity and what type of substrate it would phosphorylate (Ser, Thr or Tyr). The protein is AarF domain-containing protein kinase 1 (ADCK1) of Gallus gallus (Chicken).